Reading from the N-terminus, the 697-residue chain is Gametogenetin-binding protein 2 (697 aa).

Ser360 carries the phosphoserine modification.

As to quaternary structure, interacts with GGN. As to expression, expressed in heart, brain, placenta, lung, liver, skeletal muscle, kidney and pancreas. Expressed more abundantly in heart, pancreas and skeletal muscle.

It is found in the cytoplasmic vesicle. Functionally, may be involved in spermatogenesis. The protein is Gametogenetin-binding protein 2 (GGNBP2) of Homo sapiens (Human).